Reading from the N-terminus, the 82-residue chain is Auxin-induced protein X15 (82 aa).

It belongs to the ARG7 family.

This Glycine max (Soybean) protein is Auxin-induced protein X15.